The following is a 240-amino-acid chain: Demethylmenaquinone methyltransferase (240 aa).

S-adenosyl-L-methionine contacts are provided by residues T62, D80, 102–103 (DA), and S119.

This sequence belongs to the class I-like SAM-binding methyltransferase superfamily. MenG/UbiE family.

It catalyses the reaction a 2-demethylmenaquinol + S-adenosyl-L-methionine = a menaquinol + S-adenosyl-L-homocysteine + H(+). It functions in the pathway quinol/quinone metabolism; menaquinone biosynthesis; menaquinol from 1,4-dihydroxy-2-naphthoate: step 2/2. Functionally, methyltransferase required for the conversion of demethylmenaquinol (DMKH2) to menaquinol (MKH2). In Beutenbergia cavernae (strain ATCC BAA-8 / DSM 12333 / CCUG 43141 / JCM 11478 / NBRC 16432 / NCIMB 13614 / HKI 0122), this protein is Demethylmenaquinone methyltransferase.